Reading from the N-terminus, the 121-residue chain is Large ribosomal subunit protein uL18 (121 aa).

This sequence belongs to the universal ribosomal protein uL18 family. In terms of assembly, part of the 50S ribosomal subunit; part of the 5S rRNA/L5/L18/L25 subcomplex. Contacts the 5S and 23S rRNAs.

This is one of the proteins that bind and probably mediate the attachment of the 5S RNA into the large ribosomal subunit, where it forms part of the central protuberance. The sequence is that of Large ribosomal subunit protein uL18 from Mesomycoplasma hyopneumoniae (strain 232) (Mycoplasma hyopneumoniae).